We begin with the raw amino-acid sequence, 328 residues long: Alanine racemase (328 aa).

K33 (proton acceptor; specific for D-alanine) is an active-site residue. K33 is subject to N6-(pyridoxal phosphate)lysine. R118 serves as a coordination point for substrate. The active-site Proton acceptor; specific for L-alanine is Y237. M283 is a binding site for substrate.

Belongs to the alanine racemase family. Pyridoxal 5'-phosphate serves as cofactor.

It carries out the reaction L-alanine = D-alanine. It participates in amino-acid biosynthesis; D-alanine biosynthesis; D-alanine from L-alanine: step 1/1. In terms of biological role, catalyzes the interconversion of L-alanine and D-alanine. May also act on other amino acids. In Campylobacter jejuni (strain RM1221), this protein is Alanine racemase (alr).